A 132-amino-acid polypeptide reads, in one-letter code: Agouti-signaling protein (132 aa).

An N-terminal signal peptide occupies residues 1–22 (MDVTXLLLATLLVFLCCFAAYS). N-linked (GlcNAc...) asparagine glycosylation occurs at Asn39. Positions 62-93 (ISRKEAENKRSSKKEASKQKVARPRTPLSVPC) are disordered. Residues 64–79 (RKEAENKRSSKKEASK) show a composition bias toward basic and acidic residues. Cystine bridges form between Cys93/Cys108, Cys100/Cys114, Cys107/Cys125, Cys111/Cys132, and Cys116/Cys123. Residues 93–132 (CVSTRGSCKPPAPACCHPCASCQCRFFRSACSCRVINVNC) enclose the Agouti domain.

The protein resides in the secreted. Functionally, involved in the regulation of melanogenesis. The binding of ASP to MC1R precludes alpha-MSH initiated signaling and thus blocks production of cAMP, leading to a down-regulation of eumelanogenesis (brown/black pigment) and thus increasing synthesis of pheomelanin (yellow/red pigment). The protein is Agouti-signaling protein (ASIP) of Leontopithecus chrysomelas (Golden-headed lion tamarin).